A 130-amino-acid polypeptide reads, in one-letter code: Cholecystokinin (130 aa).

Positions 1–20 are cleaved as a signal peptide; sequence MYIGICICVLLAALSASSTG. The propeptide occupies 21–60; sequence QQTVGSMNEDPGAREIEQQNILQHPRHIRASSSAQLKPFQ. Y112 bears the Sulfotyrosine mark. F118 bears the Phenylalanine amide mark. Positions 122–130 are excised as a propeptide; sequence SAEEYEYSS. 2 positions are modified to sulfotyrosine: Y126 and Y128.

It belongs to the gastrin/cholecystokinin family. The precursor is cleaved by proteases to produce a number of active cholecystokinins. As to expression, expressed in brain, lung, testis and throughout the length of the small intestine. In the brain, expressed predominantly in the optic tectum and brain stem.

Its subcellular location is the secreted. This peptide hormone induces gall bladder contraction and the release of pancreatic enzymes in the gut. Its function in the brain is not clear. The sequence is that of Cholecystokinin (CCK) from Aquarana catesbeiana (American bullfrog).